The chain runs to 267 residues: Interleukin-2 receptor subunit alpha (267 aa).

The N-terminal stretch at 1–21 (MEPHLLMLGFLSFTIVPGCWA) is a signal peptide. A Sushi 1 domain is found at 22–79 (ELCLYDPPEVPNATFKALSYKNGTILNCECKRGFRRLNELVYMACLGNSWSNNCQCTS). Residues 22 to 235 (ELCLYDPPEV…ETFVFTKEYQ (214 aa)) lie on the Extracellular side of the membrane. 3 disulfide bridges follow: Cys-24-Cys-66, Cys-49-Cys-75, and Cys-51-Cys-77. N-linked (GlcNAc...) asparagine glycosylation is found at Asn-33 and Asn-43. Polar residues predominate over residues 82–93 (HDNSREQVTPQP). The tract at residues 82-108 (HDNSREQVTPQPEGQKEQQTTDTQKST) is disordered. The segment covering 98-108 (EQQTTDTQKST) has biased composition (low complexity). A Sushi 2 domain is found at 118-181 (GHCREPPPWR…WTHPQLTCVD (64 aa)). 2 disulfide bridges follow: Cys-120–Cys-163 and Cys-147–Cys-179. The disordered stretch occupies residues 191–215 (SEESQGSRNSFPESEASCPTPNTDF). Polar residues predominate over residues 192-215 (EESQGSRNSFPESEASCPTPNTDF). The chain crosses the membrane as a helical span at residues 236–256 (VAVASCIFLLLSILLLSGFTW). Residues 257–267 (QHRWRKSRRTI) are Cytoplasmic-facing.

Non-covalent dimer of an alpha and a beta subunit. IL2R exists in 3 different forms: a high affinity dimer, an intermediate affinity monomer (beta subunit), and a low affinity monomer (alpha subunit). The high and intermediate affinity forms also associate with a gamma subunit.

It localises to the membrane. Receptor for interleukin-2. The receptor is involved in the regulation of immune tolerance by controlling regulatory T cells (TREGs) activity. TREGs suppress the activation and expansion of autoreactive T-cells. This Rattus norvegicus (Rat) protein is Interleukin-2 receptor subunit alpha (Il2ra).